A 496-amino-acid chain; its full sequence is 3-octaprenyl-4-hydroxybenzoate carboxy-lyase (496 aa).

Asn181 lines the Mn(2+) pocket. Residues 184 to 186 (IYR), 198 to 200 (RWL), and 203 to 204 (RG) contribute to the prenylated FMN site. Position 247 (Glu247) interacts with Mn(2+). Asp296 (proton donor) is an active-site residue.

Belongs to the UbiD family. Homohexamer. Requires prenylated FMN as cofactor. Mn(2+) is required as a cofactor.

The protein localises to the cell membrane. It carries out the reaction a 4-hydroxy-3-(all-trans-polyprenyl)benzoate + H(+) = a 2-(all-trans-polyprenyl)phenol + CO2. Its pathway is cofactor biosynthesis; ubiquinone biosynthesis. Functionally, catalyzes the decarboxylation of 3-octaprenyl-4-hydroxy benzoate to 2-octaprenylphenol, an intermediate step in ubiquinone biosynthesis. In Aromatoleum aromaticum (strain DSM 19018 / LMG 30748 / EbN1) (Azoarcus sp. (strain EbN1)), this protein is 3-octaprenyl-4-hydroxybenzoate carboxy-lyase.